A 727-amino-acid chain; its full sequence is Elongation factor 2 (727 aa).

The tr-type G domain maps to 19-260 (EQIRNMGICA…MSIKHLPNPL (242 aa)). GTP is bound by residues 28 to 35 (AHIDHGKT), 94 to 98 (DTPGH), and 148 to 151 (NKVD). His-603 carries the post-translational modification Diphthamide.

It belongs to the TRAFAC class translation factor GTPase superfamily. Classic translation factor GTPase family. EF-G/EF-2 subfamily.

The protein localises to the cytoplasm. Its function is as follows. Catalyzes the GTP-dependent ribosomal translocation step during translation elongation. During this step, the ribosome changes from the pre-translocational (PRE) to the post-translocational (POST) state as the newly formed A-site-bound peptidyl-tRNA and P-site-bound deacylated tRNA move to the P and E sites, respectively. Catalyzes the coordinated movement of the two tRNA molecules, the mRNA and conformational changes in the ribosome. The polypeptide is Elongation factor 2 (Methanococcus maripaludis (strain DSM 14266 / JCM 13030 / NBRC 101832 / S2 / LL)).